A 68-amino-acid chain; its full sequence is uncharacterized protein (68 aa).

This is an uncharacterized protein from Archaeoglobus fulgidus (strain ATCC 49558 / DSM 4304 / JCM 9628 / NBRC 100126 / VC-16).